The following is a 432-amino-acid chain: Glutamyl-tRNA reductase (432 aa).

Substrate-binding positions include Thr-50–Arg-53, Ser-110, Glu-115–Gln-117, and Gln-121. Cys-51 acts as the Nucleophile in catalysis. Residue Gly-190 to Ser-195 coordinates NADP(+).

It belongs to the glutamyl-tRNA reductase family. In terms of assembly, homodimer.

It catalyses the reaction (S)-4-amino-5-oxopentanoate + tRNA(Glu) + NADP(+) = L-glutamyl-tRNA(Glu) + NADPH + H(+). The protein operates within porphyrin-containing compound metabolism; protoporphyrin-IX biosynthesis; 5-aminolevulinate from L-glutamyl-tRNA(Glu): step 1/2. In terms of biological role, catalyzes the NADPH-dependent reduction of glutamyl-tRNA(Glu) to glutamate 1-semialdehyde (GSA). The sequence is that of Glutamyl-tRNA reductase from Aliarcobacter butzleri (strain RM4018) (Arcobacter butzleri).